Reading from the N-terminus, the 43-residue chain is Protein PsbN (43 aa).

The chain crosses the membrane as a helical span at residues 5-25 (LILSIFIFSLLLGITSYSIYI).

It belongs to the PsbN family.

The protein localises to the plastid. It is found in the chloroplast thylakoid membrane. May play a role in photosystem I and II biogenesis. This is Protein PsbN from Cyanidium caldarium (Red alga).